Here is a 65-residue protein sequence, read N- to C-terminus: Cecropin (65 aa).

Positions 1 to 23 are cleaved as a signal peptide; sequence MNFVKVLFFISACILIMLSAVSG.

Belongs to the cecropin family.

Its subcellular location is the secreted. Has antibacterial activity. The sequence is that of Cecropin (LOC113514368) from Galleria mellonella (Greater wax moth).